Consider the following 468-residue polypeptide: Trehalose-2-sulfate acyltransferase PapA2 (468 aa).

Belongs to the PapA acyltransferase family.

The enzyme catalyses 2-O-sulfo-alpha,alpha-trehalose + hexadecanoyl-CoA = 2-O-sulfo-2'-O-hexadecanoyl-alpha,alpha-trehalose + CoA. Functionally, required for the biosynthesis of sulfolipid-1 (SL-1), a major mycobacterial cell wall lipid. Catalyzes the acylation of trehalose-2-sulfate by adding the palmitoyl group at the 2'-position to yield the intermediate trehalose-2-sulfate-2'-palmitate (SL659). This chain is Trehalose-2-sulfate acyltransferase PapA2 (papA2), found in Mycobacterium bovis (strain ATCC BAA-935 / AF2122/97).